We begin with the raw amino-acid sequence, 394 residues long: Elongation factor Tu (394 aa).

Residues 10–204 form the tr-type G domain; it reads KPHVNVGTIG…HLDTYIPEPE (195 aa). The G1 stretch occupies residues 19-26; the sequence is GHVDHGKT. 19–26 lines the GTP pocket; that stretch reads GHVDHGKT. Mg(2+) is bound at residue T26. The tract at residues 60–64 is G2; the sequence is GITIN. Residues 81–84 are G3; it reads DCPG. Residues 81-85 and 136-139 contribute to the GTP site; these read DCPGH and NKCD. The tract at residues 136-139 is G4; sequence NKCD. The segment at 174 to 176 is G5; sequence SAL.

Belongs to the TRAFAC class translation factor GTPase superfamily. Classic translation factor GTPase family. EF-Tu/EF-1A subfamily. As to quaternary structure, monomer.

It is found in the cytoplasm. It carries out the reaction GTP + H2O = GDP + phosphate + H(+). Functionally, GTP hydrolase that promotes the GTP-dependent binding of aminoacyl-tRNA to the A-site of ribosomes during protein biosynthesis. The chain is Elongation factor Tu from Actinobacillus pleuropneumoniae serotype 5b (strain L20).